We begin with the raw amino-acid sequence, 473 residues long: ATP synthase subunit beta (473 aa).

156–163 (GGAGVGKT) is a binding site for ATP.

It belongs to the ATPase alpha/beta chains family. F-type ATPases have 2 components, CF(1) - the catalytic core - and CF(0) - the membrane proton channel. CF(1) has five subunits: alpha(3), beta(3), gamma(1), delta(1), epsilon(1). CF(0) has three main subunits: a(1), b(2) and c(9-12). The alpha and beta chains form an alternating ring which encloses part of the gamma chain. CF(1) is attached to CF(0) by a central stalk formed by the gamma and epsilon chains, while a peripheral stalk is formed by the delta and b chains.

It localises to the cell inner membrane. It catalyses the reaction ATP + H2O + 4 H(+)(in) = ADP + phosphate + 5 H(+)(out). Its function is as follows. Produces ATP from ADP in the presence of a proton gradient across the membrane. The catalytic sites are hosted primarily by the beta subunits. This Desulfovibrio desulfuricans (strain ATCC 27774 / DSM 6949 / MB) protein is ATP synthase subunit beta.